We begin with the raw amino-acid sequence, 467 residues long: ATP-dependent protease ATPase subunit HslU (467 aa).

ATP is bound by residues Val20, 62–67 (GVGKTE), Asp280, Glu345, and Arg417.

This sequence belongs to the ClpX chaperone family. HslU subfamily. A double ring-shaped homohexamer of HslV is capped on each side by a ring-shaped HslU homohexamer. The assembly of the HslU/HslV complex is dependent on binding of ATP.

The protein localises to the cytoplasm. Its function is as follows. ATPase subunit of a proteasome-like degradation complex; this subunit has chaperone activity. The binding of ATP and its subsequent hydrolysis by HslU are essential for unfolding of protein substrates subsequently hydrolyzed by HslV. HslU recognizes the N-terminal part of its protein substrates and unfolds these before they are guided to HslV for hydrolysis. The polypeptide is ATP-dependent protease ATPase subunit HslU (Enterococcus faecalis (strain ATCC 700802 / V583)).